Here is a 396-residue protein sequence, read N- to C-terminus: uncharacterized protein (396 aa).

Lys219 carries the N6-(pyridoxal phosphate)lysine modification.

The protein belongs to the class-V pyridoxal-phosphate-dependent aminotransferase family. Requires pyridoxal 5'-phosphate as cofactor.

It is found in the cytoplasm. The protein resides in the nucleus. This is an uncharacterized protein from Schizosaccharomyces pombe (strain 972 / ATCC 24843) (Fission yeast).